The sequence spans 413 residues: Transmembrane protein 237B (413 aa).

The disordered stretch occupies residues 1 to 162 (MDPEAKVSSS…EDDDVITDPQ (162 aa)). The span at 112 to 122 (DLVSNGDTLDQ) shows a compositional bias: polar residues. 4 helical membrane-spanning segments follow: residues 233-253 (VIGLFSHGFLAGYAVWNIIVV), 274-294 (LAYPAQSLLYLLLALSTVSAF), 312-332 (LSPVALASVFYFSALVLSLSQ), and 360-380 (ILYPWITVNLVVSLLVGLAWI).

This sequence belongs to the TMEM237 family.

Its subcellular location is the membrane. It is found in the cell projection. The protein resides in the cilium. Component of the transition zone in primary cilia. Required for ciliogenesis. In Danio rerio (Zebrafish), this protein is Transmembrane protein 237B (tmem237b).